Here is a 286-residue protein sequence, read N- to C-terminus: Protein HEAT-STRESS-ASSOCIATED 32 (286 aa).

It belongs to the phosphosulfolactate synthase family.

Its function is as follows. Transactivator required, together with HSP101, for long-term acquired thermotolerance (LAT) maintenance, probably by regulating heat-inducible genes expression, thus being a cellular component of thermomemory. The sequence is that of Protein HEAT-STRESS-ASSOCIATED 32 from Arabidopsis thaliana (Mouse-ear cress).